We begin with the raw amino-acid sequence, 424 residues long: UPF0597 protein Sbal223_1296 (424 aa).

This sequence belongs to the UPF0597 family.

The chain is UPF0597 protein Sbal223_1296 from Shewanella baltica (strain OS223).